The following is a 189-amino-acid chain: Apolipoprotein D (189 aa).

Residues 1–20 form the signal peptide; that stretch reads MVTMLMFLATLAGLFTTAKG. Gln21 is subject to Pyrrolidone carboxylic acid. 2 disulfide bridges follow: Cys28-Cys134 and Cys61-Cys185. Asn65 and Asn98 each carry an N-linked (GlcNAc...) asparagine glycan.

It belongs to the calycin superfamily. Lipocalin family. As to quaternary structure, homodimer. As to expression, highest levels of expression in brain, testis, virgin mammary gland and salivary gland. Moderate levels in skeletal muscle, lactating mammary gland and thymus. Low levels in lung and lymph node. No expression in kidney, pancreas, liver or spleen.

It localises to the secreted. In terms of biological role, APOD occurs in the macromolecular complex with lecithin-transport and binding of bilin. Appears to be able to transport a variety of ligands in a number of different contexts. The chain is Apolipoprotein D (Apod) from Mus musculus (Mouse).